The primary structure comprises 341 residues: Processive diacylglycerol beta-glycosyltransferase (341 aa).

This sequence belongs to the glycosyltransferase 2 family. The cofactor is Mg(2+).

The protein localises to the cell membrane. It carries out the reaction a 1,2-diacyl-sn-glycerol + UDP-alpha-D-glucose = a 1,2-diacyl-3-O-(beta-D-glucopyranosyl)-sn-glycerol + UDP + H(+). The enzyme catalyses a 1,2-diacyl-sn-glycerol + UDP-alpha-D-galactose = a 1,2-diacyl-3-O-(beta-D-galactosyl)-sn-glycerol + UDP + H(+). It catalyses the reaction a 1,2-diacyl-3-O-(beta-D-glucopyranosyl)-sn-glycerol + UDP-alpha-D-glucose = a 1,2-diacyl-3-O-(beta-D-Glc-(1-&gt;6)-beta-D-Glc)-sn-glycerol + UDP + H(+). The catalysed reaction is a 1,2-diacyl-3-O-(beta-D-galactosyl)-sn-glycerol + UDP-alpha-D-galactose = a 1,2-diacyl-3-O-[beta-D-galactosyl-(1-&gt;6)-beta-D-galactosyl]-sn-glycerol + UDP + H(+). Its pathway is glycolipid metabolism; diglucosyl-diacylglycerol biosynthesis. With respect to regulation, activated by the negatively charged lipid dioleoylphosphatidylglycerol (DOPG) and inhibited by N-(n-nonyl)deoxygalactonojirimycin (C9J). Functionally, processive glycosyltransferase involved in the biosynthesis of both the non-bilayer-prone beta-monoglycosyldiacylglycerol and the bilayer-forming membrane lipid beta-diglycosyldiacylglycerol. These components contribute to regulate the properties and stability of the membrane. Catalyzes sequentially the transfers of glucosyl or galactosyl residues from UDP-Glc or UDP-Gal to diacylglycerol (DAG) acceptor to form the corresponding beta-glycosyl-DAG (3-O-(beta-D-glycopyranosyl)-1,2-diacyl-sn-glycerol), which then acts as acceptor to give beta-diglycosyl-DAG product (3-O-(beta-D-glycopyranosyl-beta-(1-&gt;6)-D-glycopyranosyl)-1,2-diacyl-sn-glycerol). Dioleoylglycerol (DOG) is a preferred sugar acceptor than 3-O-(beta-D-glucopyranosyl)-1,2-dioleoyl-sn-glycerol. In Mycoplasma genitalium (strain ATCC 33530 / DSM 19775 / NCTC 10195 / G37) (Mycoplasmoides genitalium), this protein is Processive diacylglycerol beta-glycosyltransferase.